Reading from the N-terminus, the 449-residue chain is Na(+)/H(+) antiporter NhaA 1 (449 aa).

11 helical membrane passes run 38-58 (GILL…PWAA), 79-99 (FTIR…VVGM), 117-137 (VLPL…YAAF), 145-165 (AGWA…LTLV), 175-195 (VFLT…IALF), 198-218 (SGLH…LACL), 240-260 (MHHG…FMPA), 311-331 (FVHL…ALAN), 347-367 (PLPL…IFLF), 390-410 (GVAV…GLAF), and 422-442 (LGIL…LRFV).

Belongs to the NhaA Na(+)/H(+) (TC 2.A.33) antiporter family.

The protein resides in the cell inner membrane. It carries out the reaction Na(+)(in) + 2 H(+)(out) = Na(+)(out) + 2 H(+)(in). In terms of biological role, na(+)/H(+) antiporter that extrudes sodium in exchange for external protons. In Myxococcus xanthus (strain DK1622), this protein is Na(+)/H(+) antiporter NhaA 1.